Consider the following 248-residue polypeptide: 2,3-bisphosphoglycerate-dependent phosphoglycerate mutase (248 aa).

Residues 8 to 15, 21 to 22, arginine 60, 87 to 90, lysine 98, 114 to 115, and 183 to 184 contribute to the substrate site; these read RHGESTWN, TG, ERHY, RR, and GN. Residue histidine 9 is the Tele-phosphohistidine intermediate of the active site. The active-site Proton donor/acceptor is the glutamate 87.

Belongs to the phosphoglycerate mutase family. BPG-dependent PGAM subfamily. As to quaternary structure, homodimer.

The catalysed reaction is (2R)-2-phosphoglycerate = (2R)-3-phosphoglycerate. The protein operates within carbohydrate degradation; glycolysis; pyruvate from D-glyceraldehyde 3-phosphate: step 3/5. Its function is as follows. Catalyzes the interconversion of 2-phosphoglycerate and 3-phosphoglycerate. This chain is 2,3-bisphosphoglycerate-dependent phosphoglycerate mutase, found in Burkholderia orbicola (strain MC0-3).